The chain runs to 38 residues: Photosystem II reaction center protein L (38 aa).

The chain crosses the membrane as a helical span at residues 17 to 37; that stretch reads SLYWGLLLIFVLAVLFSNYFF.

It belongs to the PsbL family. In terms of assembly, PSII is composed of 1 copy each of membrane proteins PsbA, PsbB, PsbC, PsbD, PsbE, PsbF, PsbH, PsbI, PsbJ, PsbK, PsbL, PsbM, PsbT, PsbX, PsbY, PsbZ, Psb30/Ycf12, at least 3 peripheral proteins of the oxygen-evolving complex and a large number of cofactors. It forms dimeric complexes.

It localises to the plastid. It is found in the chloroplast thylakoid membrane. One of the components of the core complex of photosystem II (PSII). PSII is a light-driven water:plastoquinone oxidoreductase that uses light energy to abstract electrons from H(2)O, generating O(2) and a proton gradient subsequently used for ATP formation. It consists of a core antenna complex that captures photons, and an electron transfer chain that converts photonic excitation into a charge separation. This subunit is found at the monomer-monomer interface and is required for correct PSII assembly and/or dimerization. This chain is Photosystem II reaction center protein L, found in Antirrhinum majus (Garden snapdragon).